The chain runs to 185 residues: Vomeronasal secretory protein 2 (185 aa).

An N-terminal signal peptide occupies residues 1-19 (MKSLLLTVTLSSLVATLQT). Cys-80 and Cys-172 are oxidised to a cystine.

Belongs to the calycin superfamily. Lipocalin family. As to expression, specifically expressed in vomeronasal and posterior glands of the nasal septum, the ducts of which open into the lumen of the vomeronasal organ.

The protein resides in the secreted. Transport of lipophilic molecules, possible pheromone-carrier. The protein is Vomeronasal secretory protein 2 (Lcn4) of Mus musculus (Mouse).